The chain runs to 284 residues: Ribosomal RNA small subunit methyltransferase A (284 aa).

S-adenosyl-L-methionine-binding residues include His-23, Leu-25, Gly-50, Glu-71, Asp-92, and Asn-121.

Belongs to the class I-like SAM-binding methyltransferase superfamily. rRNA adenine N(6)-methyltransferase family. RsmA subfamily.

Its subcellular location is the cytoplasm. The catalysed reaction is adenosine(1518)/adenosine(1519) in 16S rRNA + 4 S-adenosyl-L-methionine = N(6)-dimethyladenosine(1518)/N(6)-dimethyladenosine(1519) in 16S rRNA + 4 S-adenosyl-L-homocysteine + 4 H(+). Its function is as follows. Specifically dimethylates two adjacent adenosines (A1518 and A1519) in the loop of a conserved hairpin near the 3'-end of 16S rRNA in the 30S particle. May play a critical role in biogenesis of 30S subunits. This is Ribosomal RNA small subunit methyltransferase A from Verminephrobacter eiseniae (strain EF01-2).